The following is a 740-amino-acid chain: Eukaryotic translation initiation factor 3 subunit B (740 aa).

The span at 1-10 (MAPSFDTLSE) shows a compositional bias: polar residues. The interval 1-20 (MAPSFDTLSEQDLHEEEEEE) is disordered. Residues 40-126 (TFVVIDGLPV…HTLLVNKLMD (87 aa)) enclose the RRM domain. WD repeat units follow at residues 193-230 (AHWTQLFAQWSPKGTYLASVHPQGVQLWGGPAFSKQKQ), 232-289 (PHPF…RSFV), 302-343 (EPKK…LLGK), 455-496 (SLKD…SFFA), 513-556 (IEKK…EKPE), and 571-609 (IEHYGVTDIDWDPTGRYVVSSASVWTHQLENGWNMHTFA). Residues 695 to 721 (DAYGLPEEADDPKLAKDAAATTQEQGE) are disordered.

This sequence belongs to the eIF-3 subunit B family. Component of the eukaryotic translation initiation factor 3 (eIF-3) complex.

The protein localises to the cytoplasm. In terms of biological role, RNA-binding component of the eukaryotic translation initiation factor 3 (eIF-3) complex, which is involved in protein synthesis of a specialized repertoire of mRNAs and, together with other initiation factors, stimulates binding of mRNA and methionyl-tRNAi to the 40S ribosome. The eIF-3 complex specifically targets and initiates translation of a subset of mRNAs involved in cell proliferation. The protein is Eukaryotic translation initiation factor 3 subunit B (prt1) of Neosartorya fischeri (strain ATCC 1020 / DSM 3700 / CBS 544.65 / FGSC A1164 / JCM 1740 / NRRL 181 / WB 181) (Aspergillus fischerianus).